The sequence spans 442 residues: tRNA modification GTPase MnmE (442 aa).

Positions 21, 79, and 118 each coordinate (6S)-5-formyl-5,6,7,8-tetrahydrofolate. The TrmE-type G domain maps to 214 to 367; it reads GFKIAIVGKP…LKEELQNYLN (154 aa). Position 224 (Asn224) interacts with K(+). Residues 224–229, 243–249, and 268–271 each bind GTP; these read NVGKSS, SDIAGTT, and DTAG. Position 228 (Ser228) interacts with Mg(2+). K(+) contacts are provided by Ser243, Ile245, and Thr248. Thr249 contributes to the Mg(2+) binding site. Residue Lys442 coordinates (6S)-5-formyl-5,6,7,8-tetrahydrofolate.

It belongs to the TRAFAC class TrmE-Era-EngA-EngB-Septin-like GTPase superfamily. TrmE GTPase family. As to quaternary structure, homodimer. Heterotetramer of two MnmE and two MnmG subunits. K(+) is required as a cofactor.

It localises to the cytoplasm. Functionally, exhibits a very high intrinsic GTPase hydrolysis rate. Involved in the addition of a carboxymethylaminomethyl (cmnm) group at the wobble position (U34) of certain tRNAs, forming tRNA-cmnm(5)s(2)U34. The protein is tRNA modification GTPase MnmE of Campylobacter jejuni (strain RM1221).